A 570-amino-acid polypeptide reads, in one-letter code: Multidrug and toxin extrusion protein 1 (570 aa).

M1 is modified (N-acetylmethionine). The Cytoplasmic portion of the chain corresponds to 1 to 37 (MEAPEEPAPVRGGPEATLEIHGSRFLRLSAFREELRA). A helical transmembrane segment spans residues 38–58 (LLVLAGPAFLVQLMVFLISFI). Topologically, residues 59–72 (SSVFCGHLGKLELD) are extracellular. The helical transmembrane segment at 73 to 93 (AVTLAIAVINVTGVSVGFGLS) threads the bilayer. Residues 94–120 (SACDTLISQTYGSQNLKHVGVILQRSA) lie on the Cytoplasmic side of the membrane. A helical transmembrane segment spans residues 121 to 141 (LILLLCCFPCWALFLNTQHIL). Over 142 to 152 (LLFRQDPDVSR) the chain is Extracellular. Residues 153 to 173 (LTQTYVTIFIPALPATFLYML) traverse the membrane as a helical segment. The Cytoplasmic portion of the chain corresponds to 174–176 (QVK). Residues 177–197 (YLLNQGIVLPQIVTGVAANLV) traverse the membrane as a helical segment. The Extracellular portion of the chain corresponds to 198–216 (NALANYLFLHQLHLGAIGS). A helical transmembrane segment spans residues 217 to 237 (ALANLISQYTLALLLFFYILG). The Cytoplasmic segment spans residues 238–251 (KKLHQATWGGWSLE). Residues 252–272 (CLQDWASFLHLAVPSMLMLCM) traverse the membrane as a helical segment. At 273 to 295 (EWWAYEVGSFLSGILGMVELGAQ) the chain is on the extracellular side. The chain crosses the membrane as a helical span at residues 296–316 (SIVYELAIIVYMVPAGFSVAA). The Cytoplasmic portion of the chain corresponds to 317 to 336 (SVRVGNALGAGDMEQARKSS). Residues 337-357 (TVSLLITVLFAVAFSVLLLSC) traverse the membrane as a helical segment. Over 358 to 370 (KDHVGYIFTTDRD) the chain is Extracellular. Residues 371-391 (IINLVAQVVPIYAVSHLFEAL) traverse the membrane as a helical segment. Over 392 to 408 (ACTSGGVLRGSGNQKVG) the chain is Cytoplasmic. The chain crosses the membrane as a helical span at residues 409–429 (AIVNTIGYYVVGLPIGIALMF). At 430 to 437 (ATKLGVMG) the chain is on the extracellular side. Residues 438-458 (LWSGIIICTVFQAVCFLGFII) form a helical membrane-spanning segment. At 459-546 (QLNWKKACQQ…LSRKQLVLRR (88 aa)) the chain is on the cytoplasmic side. Residues 508-534 (DVGKTGETQSDQQMRQEEPLPEHPQDS) are disordered. Residues 521–533 (MRQEEPLPEHPQD) show a composition bias toward basic and acidic residues. The chain crosses the membrane as a helical span at residues 547 to 567 (GLLLLGVFLILLVGILVRFYV). Residues 568–570 (RIQ) lie on the Extracellular side of the membrane.

The protein belongs to the multi antimicrobial extrusion (MATE) (TC 2.A.66.1) family.

Its subcellular location is the cell membrane. It is found in the apical cell membrane. It catalyses the reaction thiamine(out) + H(+)(in) = thiamine(in) + H(+)(out). The catalysed reaction is estrone 3-sulfate(in) + H(+)(out) = estrone 3-sulfate(out) + H(+)(in). The enzyme catalyses creatinine(in) + H(+)(out) = creatinine(out) + H(+)(in). It carries out the reaction agmatine(in) + H(+)(out) = agmatine(out) + H(+)(in). Multidrug efflux pump that functions as a H(+)/organic cation antiporter. Plays a physiological role in the excretion of cationic compounds including endogenous metabolites, drugs, toxins through the kidney and liver, into urine and bile respectively. Mediates the efflux of endogenous compounds such as creatinine, vitamin B1/thiamine, agmatine and estrone-3-sulfate. May also contribute to regulate the transport of cationic compounds in testis across the blood-testis-barrier. This is Multidrug and toxin extrusion protein 1 (SLC47A1) from Pongo abelii (Sumatran orangutan).